A 321-amino-acid chain; its full sequence is UDP-N-acetylenolpyruvoylglucosamine reductase (321 aa).

An FAD-binding PCMH-type domain is found at 36–203; that stretch reads FRAGGLAEVM…TGALFEGYPE (168 aa). Residue Arg-183 is part of the active site. Ser-232 acts as the Proton donor in catalysis. Residue Glu-302 is part of the active site.

This sequence belongs to the MurB family. Requires FAD as cofactor.

Its subcellular location is the cytoplasm. It catalyses the reaction UDP-N-acetyl-alpha-D-muramate + NADP(+) = UDP-N-acetyl-3-O-(1-carboxyvinyl)-alpha-D-glucosamine + NADPH + H(+). Its pathway is cell wall biogenesis; peptidoglycan biosynthesis. Its function is as follows. Cell wall formation. This Agrobacterium fabrum (strain C58 / ATCC 33970) (Agrobacterium tumefaciens (strain C58)) protein is UDP-N-acetylenolpyruvoylglucosamine reductase.